The primary structure comprises 585 residues: Arginine--tRNA ligase (585 aa).

Residues 130 to 140 (ANPTGPMHVGH) carry the 'HIGH' region motif.

This sequence belongs to the class-I aminoacyl-tRNA synthetase family. Monomer.

The protein localises to the cytoplasm. It catalyses the reaction tRNA(Arg) + L-arginine + ATP = L-arginyl-tRNA(Arg) + AMP + diphosphate. The chain is Arginine--tRNA ligase from Methylorubrum extorquens (strain CM4 / NCIMB 13688) (Methylobacterium extorquens).